The primary structure comprises 73 residues: Protein kish (73 aa).

A signal peptide spans 1–21 (MTAIFNFESLLFVILLTICTC). Residues 22–52 (TYLHRQFPALLEKRKEGVTMVFWKCARIGER) are Lumenal-facing. The chain crosses the membrane as a helical span at residues 53–73 (ASPYISLFCVFMALRFIFGSS).

The protein belongs to the KISH family.

Its subcellular location is the golgi apparatus membrane. The protein resides in the endoplasmic reticulum membrane. Its function is as follows. Involved in the early part of the secretory pathway. This chain is Protein kish (ksh1), found in Schizosaccharomyces pombe (strain 972 / ATCC 24843) (Fission yeast).